Here is a 349-residue protein sequence, read N- to C-terminus: Protein RecA (349 aa).

ATP is bound at residue 66–73 (GPESSGKT).

It belongs to the RecA family.

It is found in the cytoplasm. Functionally, can catalyze the hydrolysis of ATP in the presence of single-stranded DNA, the ATP-dependent uptake of single-stranded DNA by duplex DNA, and the ATP-dependent hybridization of homologous single-stranded DNAs. It interacts with LexA causing its activation and leading to its autocatalytic cleavage. In Psychrobacter sp. (strain PRwf-1), this protein is Protein RecA.